Reading from the N-terminus, the 707-residue chain is Protein kinase C theta type (707 aa).

The C2 domain occupies 1–107; it reads MSPFLRIGLS…KNNGRTEIWL (107 aa). A Phosphotyrosine; by LCK modification is found at Tyr-90. Residues 159-209 form a Phorbol-ester/DAG-type 1 zinc finger; that stretch reads CHEFTATFFPQPTFCSVCHEFVWGLNKQGYQCRQCNAAIHKKCIDKVIAKC. Phosphothreonine; by autocatalysis is present on Thr-219. The Phorbol-ester/DAG-type 2 zinc-finger motif lies at 231–281; that stretch reads PHRFKVYNYKSPTFCEHCGTLLWGLARQGLKCDACGMNVHHRCQTKVANLC. A disordered region spans residues 327-365; it reads ETRPPCVPTPGKREPQGISWDSPLDGSNKSAGPPEPEVS. Ser-348 is subject to Phosphoserine. The 255-residue stretch at 380-634 folds into the Protein kinase domain; sequence FILHKMLGKG…RGDIRQHPLF (255 aa). Residues 386 to 394 and Lys-409 each bind ATP; that span reads LGKGSFGKV. Asp-504 (proton acceptor) is an active-site residue. A Phosphothreonine; by PDPK1 modification is found at Thr-538. The AGC-kinase C-terminal domain maps to 635-706; sequence REINWEELER…INPGMETLIC (72 aa). Ser-676 is modified (phosphoserine; by autocatalysis). Residue Ser-685 is modified to Phosphoserine. Residue Ser-695 is modified to Phosphoserine; by autocatalysis.

Belongs to the protein kinase superfamily. AGC Ser/Thr protein kinase family. PKC subfamily. As to quaternary structure, part of a membrane raft complex composed at least of BCL10, CARD11, MALT1 and IKBKB. Interacts with GLRX3 (via N-terminus). Interacts with ECT2. Interacts with CCDC88A/GIV; the interaction leads to phosphorylation of CCDC88A and inhibition of its guanine nucleotide exchange factor activity. Interacts with CD28. It depends on Mg(2+) as a cofactor. Autophosphorylation at Thr-219 is required for targeting to the TCR and cellular function of PRKCQ upon antigen receptor ligation. Following TCR stimulation, phosphorylated at Tyr-90 and Ser-685. T-lymphocytes and skeletal muscle.

Its subcellular location is the cytoplasm. It localises to the cell membrane. The catalysed reaction is L-seryl-[protein] + ATP = O-phospho-L-seryl-[protein] + ADP + H(+). It carries out the reaction L-threonyl-[protein] + ATP = O-phospho-L-threonyl-[protein] + ADP + H(+). With respect to regulation, novel PKCs (PRKCD, PRKCE, PRKCH and PRKCQ) are calcium-insensitive, but activated by diacylglycerol (DAG) and phosphatidylserine. Three specific sites; Thr-538 (activation loop of the kinase domain), Ser-676 (turn motif) and Ser-695 (hydrophobic region), need to be phosphorylated for its full activation. Functionally, calcium-independent, phospholipid- and diacylglycerol (DAG)-dependent serine/threonine-protein kinase that mediates non-redundant functions in T-cell receptor (TCR) signaling, including T-cells activation, proliferation, differentiation and survival, by mediating activation of multiple transcription factors such as NF-kappa-B, JUN, NFATC1 and NFATC2. In TCR-CD3/CD28-co-stimulated T-cells, is required for the activation of NF-kappa-B and JUN, which in turn are essential for IL2 production, and participates in the calcium-dependent NFATC1 and NFATC2 transactivation. Mediates the activation of the canonical NF-kappa-B pathway (NFKB1) by direct phosphorylation of CARD11 on several serine residues, inducing CARD11 association with lipid rafts and recruitment of the BCL10-MALT1 complex, which then activates IKK complex, resulting in nuclear translocation and activation of NFKB1. May also play an indirect role in activation of the non-canonical NF-kappa-B (NFKB2) pathway. In the signaling pathway leading to JUN activation, acts by phosphorylating the mediator STK39/SPAK and may not act through MAP kinases signaling. Plays a critical role in TCR/CD28-induced NFATC1 and NFATC2 transactivation by participating in the regulation of reduced inositol 1,4,5-trisphosphate generation and intracellular calcium mobilization. After costimulation of T-cells through CD28 can phosphorylate CBLB and is required for the ubiquitination and subsequent degradation of CBLB, which is a prerequisite for the activation of TCR. During T-cells differentiation, plays an important role in the development of T-helper 2 (Th2) cells following immune and inflammatory responses, and, in the development of inflammatory autoimmune diseases, is necessary for the activation of IL17-producing Th17 cells. May play a minor role in Th1 response. Upon TCR stimulation, mediates T-cell protective survival signal by phosphorylating BAD, thus protecting T-cells from BAD-induced apoptosis, and by up-regulating BCL-X(L)/BCL2L1 levels through NF-kappa-B and JUN pathways. In platelets, regulates signal transduction downstream of the ITGA2B, CD36/GP4, F2R/PAR1 and F2RL3/PAR4 receptors, playing a positive role in 'outside-in' signaling and granule secretion signal transduction. May relay signals from the activated ITGA2B receptor by regulating the uncoupling of WASP and WIPF1, thereby permitting the regulation of actin filament nucleation and branching activity of the Arp2/3 complex. May mediate inhibitory effects of free fatty acids on insulin signaling by phosphorylating IRS1, which in turn blocks IRS1 tyrosine phosphorylation and downstream activation of the PI3K/AKT pathway. Phosphorylates MSN (moesin) in the presence of phosphatidylglycerol or phosphatidylinositol. Phosphorylates PDPK1 at 'Ser-504' and 'Ser-532' and negatively regulates its ability to phosphorylate PKB/AKT1. Phosphorylates CCDC88A/GIV and inhibits its guanine nucleotide exchange factor activity. Phosphorylates and activates LRRK1, which phosphorylates RAB proteins involved in intracellular trafficking. This is Protein kinase C theta type (Prkcq) from Mus musculus (Mouse).